The primary structure comprises 610 residues: UvrABC system protein C (610 aa).

A GIY-YIG domain is found at 16–94; the sequence is SQPGVYRMYD…IKLYQPRYNV (79 aa). The UVR domain maps to 204-239; sequence DQVINQLVSRMEQASQNLAFEEAARLRDQIQAVRRV.

The protein belongs to the UvrC family. As to quaternary structure, interacts with UvrB in an incision complex.

It is found in the cytoplasm. Functionally, the UvrABC repair system catalyzes the recognition and processing of DNA lesions. UvrC both incises the 5' and 3' sides of the lesion. The N-terminal half is responsible for the 3' incision and the C-terminal half is responsible for the 5' incision. In Cronobacter sakazakii (strain ATCC BAA-894) (Enterobacter sakazakii), this protein is UvrABC system protein C.